Here is a 221-residue protein sequence, read N- to C-terminus: MKRFLLLIILFGISFSFVSDYLLRAESLFSQLKDANAKEETPYLYGKVKGYYEAIKLYAVEYKEDRIKTLFTLMSKNTKKAVRGAYTEREPLTELITFEPRVYFEEYCDGIMDECFYEKHYEKEKFIELVDYFSLKRRVEFLRNHEGKYCAPFDFGMAEALFNAVSLELMQEKPDEKVLIALREKLEPILVMAEEKLRYAMKKELPCYRNRLSEHIGYWKP.

A signal peptide spans 1-18; sequence MKRFLLLIILFGISFSFV.

This is an uncharacterized protein from Aquifex aeolicus (strain VF5).